The sequence spans 470 residues: Siroheme synthase (470 aa).

The interval 1-201 is precorrin-2 dehydrogenase /sirohydrochlorin ferrochelatase; that stretch reads MDYFPIFCQL…NDHVQADQHV (201 aa). Residues 22 to 23 and 43 to 44 contribute to the NAD(+) site; these read EI and CE. Residue S128 is modified to Phosphoserine. Positions 213-470 are uroporphyrinogen-III C-methyltransferase; that stretch reads GEVVLVGAGP…KVTECVAHVG (258 aa). P222 contributes to the S-adenosyl-L-methionine binding site. D245 acts as the Proton acceptor in catalysis. The active-site Proton donor is K267. S-adenosyl-L-methionine contacts are provided by residues 298–300, I303, 328–329, M379, and G408; these read GGD and TA.

In the N-terminal section; belongs to the precorrin-2 dehydrogenase / sirohydrochlorin ferrochelatase family. This sequence in the C-terminal section; belongs to the precorrin methyltransferase family.

The enzyme catalyses uroporphyrinogen III + 2 S-adenosyl-L-methionine = precorrin-2 + 2 S-adenosyl-L-homocysteine + H(+). It carries out the reaction precorrin-2 + NAD(+) = sirohydrochlorin + NADH + 2 H(+). The catalysed reaction is siroheme + 2 H(+) = sirohydrochlorin + Fe(2+). The protein operates within cofactor biosynthesis; adenosylcobalamin biosynthesis; precorrin-2 from uroporphyrinogen III: step 1/1. Its pathway is cofactor biosynthesis; adenosylcobalamin biosynthesis; sirohydrochlorin from precorrin-2: step 1/1. It participates in porphyrin-containing compound metabolism; siroheme biosynthesis; precorrin-2 from uroporphyrinogen III: step 1/1. It functions in the pathway porphyrin-containing compound metabolism; siroheme biosynthesis; siroheme from sirohydrochlorin: step 1/1. The protein operates within porphyrin-containing compound metabolism; siroheme biosynthesis; sirohydrochlorin from precorrin-2: step 1/1. Its function is as follows. Multifunctional enzyme that catalyzes the SAM-dependent methylations of uroporphyrinogen III at position C-2 and C-7 to form precorrin-2 via precorrin-1. Then it catalyzes the NAD-dependent ring dehydrogenation of precorrin-2 to yield sirohydrochlorin. Finally, it catalyzes the ferrochelation of sirohydrochlorin to yield siroheme. The polypeptide is Siroheme synthase (Yersinia pestis).